Here is a 246-residue protein sequence, read N- to C-terminus: B-cell receptor-associated protein 31 (246 aa).

The Lumenal portion of the chain corresponds to 2–6 (SLQWT). A helical transmembrane segment spans residues 7-27 (AVATFLYAEVFVVLLLCIPFI). Residues 28-43 (SPKRWQKIFKSRLVEL) lie on the Cytoplasmic side of the membrane. Residues 44–64 (LVSYGNTFFVVLIVILVLLVI) traverse the membrane as a helical segment. The Lumenal segment spans residues 65–102 (DAVREIRKYDDVTEKVNLQNNPGAMEHFHMKLFRAQRN). Residues 103–123 (LYIAGFSLLLSFLLRRLVTLI) traverse the membrane as a helical segment. At 124 to 246 (SQQATLLASN…VDGPMDKKEE (123 aa)) the chain is on the cytoplasmic side. Positions 165–237 (GGKLDVGNAE…EEHAKLQAAV (73 aa)) form a coiled coil. The Di-lysine motif motif lies at 243 to 246 (KKEE).

Belongs to the BCAP29/BCAP31 family. Homodimer and heterodimer with BCAP29. Binds CASP8 (isoform 9) as a complex containing BCAP31, BCAP29, BCL2 and/or BCL2L1. Forms a complex (via C-terminus) with TOMM40 which mediates the translocation of components of the mitochondrial membrane respiratory chain NADH dehydrogenase (Complex I) from the cytosol to the mitochondria; within the complex BCAP31 interacts directly with unprocessed and processed NDUFS4 and NDUFB11. Interacts with VDAC1. Interacts with VAMP3, VAMP1 and membrane IgD immunoglobulins. Interacts with HACD2. Interacts with DNM1L; may form part of a larger protein complex at the endoplasmic reticulum-mitochondrial interface during mitochondrial fission. In terms of assembly, (Microbial infection) Interacts (via C-terminus) with HRSV membrane protein SH; this interaction is direct. Cleaved by CASP8 and other caspases. Ubiquitous. Highly expressed in neurons and discrete endocrine cells.

The protein localises to the endoplasmic reticulum membrane. It is found in the endoplasmic reticulum-Golgi intermediate compartment membrane. In terms of biological role, functions as a chaperone protein. Is one of the most abundant endoplasmic reticulum (ER) proteins. Plays a role in the export of secreted proteins in the ER, the recognition of abnormally folded protein and their targeting to the ER associated-degradation (ERAD). Also serves as a cargo receptor for the export of transmembrane proteins. Plays a role in the assembly of the mitochondrial membrane respiratory chain NADH dehydrogenase (Complex I) by stimulating the translocation of NDUFS4 and NDUFB11 from the cytosol to the mitochondria via interaction with TOMM40. In response to ER stress, delocalizes from the ER-mitochondria contact sites and binds BCL2. May be involved in CASP8-mediated apoptosis. The chain is B-cell receptor-associated protein 31 from Homo sapiens (Human).